The chain runs to 192 residues: uncharacterized protein (192 aa).

It to M.thermoautotrophicum MTH863.

This is an uncharacterized protein from Methanocaldococcus jannaschii (strain ATCC 43067 / DSM 2661 / JAL-1 / JCM 10045 / NBRC 100440) (Methanococcus jannaschii).